Here is a 293-residue protein sequence, read N- to C-terminus: uncharacterized protein (293 aa).

A disordered region spans residues 1 to 22 (MTFNEGVQIDTSTTSTSGSGGG). The helical transmembrane segment at 25–45 (LAIGGGLGGLLVVVVAMLLGV) threads the bilayer. The disordered stretch occupies residues 243 to 265 (GDDRIQQQTTGRTNPETWTHGSA). A compositionally biased stretch (polar residues) spans 248–265 (QQQTTGRTNPETWTHGSA).

The protein resides in the membrane. This is an uncharacterized protein from Mycobacterium tuberculosis (strain CDC 1551 / Oshkosh).